The following is a 162-amino-acid chain: Protein-export protein SecB (162 aa).

The protein belongs to the SecB family. Homotetramer, a dimer of dimers. One homotetramer interacts with 1 SecA dimer.

It is found in the cytoplasm. One of the proteins required for the normal export of preproteins out of the cell cytoplasm. It is a molecular chaperone that binds to a subset of precursor proteins, maintaining them in a translocation-competent state. It also specifically binds to its receptor SecA. This is Protein-export protein SecB from Pseudoalteromonas translucida (strain TAC 125).